A 369-amino-acid polypeptide reads, in one-letter code: Maltose/maltodextrin import ATP-binding protein MalK (369 aa).

In terms of domain architecture, ABC transporter spans 4 to 234 (VTLRNVCKSY…PKNRFVAGFI (231 aa)). 36-43 (GPSGCGKS) lines the ATP pocket.

Belongs to the ABC transporter superfamily. Maltooligosaccharide importer (TC 3.A.1.1.1) family. As to quaternary structure, the complex is composed of two ATP-binding proteins (MalK), two transmembrane proteins (MalG and MalK) and a solute-binding protein (MalE).

Its subcellular location is the cell inner membrane. The enzyme catalyses D-maltose(out) + ATP + H2O = D-maltose(in) + ADP + phosphate + H(+). Functionally, part of the ABC transporter complex MalEFGK involved in maltose/maltodextrin import. Responsible for energy coupling to the transport system. The sequence is that of Maltose/maltodextrin import ATP-binding protein MalK from Aliivibrio fischeri (strain ATCC 700601 / ES114) (Vibrio fischeri).